A 129-amino-acid chain; its full sequence is MASAWPRSLPQILVLGFGLVLMRAAAGEQAPGTSPCSSGSSWSADLDKCMDCASCPARPHSDFCLGCAAAPPAHFRLLWPILGGALSLVLVLALVSSFLVWRRCRRREKFTTPIEETGGEGCPGVALIQ.

A signal peptide spans 1-27 (MASAWPRSLPQILVLGFGLVLMRAAAG). The Extracellular segment spans residues 28 to 80 (EQAPGTSPCSSGSSWSADLDKCMDCASCPARPHSDFCLGCAAAPPAHFRLLWP). Disulfide bonds link Cys-36–Cys-49, Cys-52–Cys-67, and Cys-55–Cys-64. Residues 36–67 (CSSGSSWSADLDKCMDCASCPARPHSDFCLGC) form a TNFR-Cys; atypical repeat. Residues 81–101 (ILGGALSLVLVLALVSSFLVW) form a helical membrane-spanning segment. The Cytoplasmic portion of the chain corresponds to 102–129 (RRCRRREKFTTPIEETGGEGCPGVALIQ).

In terms of assembly, associates with TRAF1 and TRAF2, and probably also with TRAF3. As to expression, highly expressed in fetal heart, intestine, kidney, liver, lung and skin, and in adult heart and ovary. Intermediate expression in adult kidney, lung and skin.

Its subcellular location is the membrane. Functionally, receptor for TNFSF12/TWEAK. Weak inducer of apoptosis in some cell types. Promotes angiogenesis and the proliferation of endothelial cells. May modulate cellular adhesion to matrix proteins. In Mus musculus (Mouse), this protein is Tumor necrosis factor receptor superfamily member 12A (Tnfrsf12a).